The sequence spans 206 residues: Probable 5-formyltetrahydrofolate cyclo-ligase (206 aa).

Residues 8–12 and arginine 12 contribute to the ATP site; that span reads KSELR. Substrate-binding positions include valine 54, glutamate 59, and 146-150; that span reads HGKGY. Position 143 to 151 (143 to 151) interacts with ATP; the sequence is RCGHGKGYY. The Mg(2+) site is built by aspartate 152 and aspartate 188.

Belongs to the 5-formyltetrahydrofolate cyclo-ligase family. In terms of assembly, monomer. Mg(2+) serves as cofactor.

The protein resides in the cytoplasm. It catalyses the reaction (6S)-5-formyl-5,6,7,8-tetrahydrofolate + ATP = (6R)-5,10-methenyltetrahydrofolate + ADP + phosphate. Functionally, contributes to tetrahydrofolate metabolism. Helps regulate carbon flow through the folate-dependent one-carbon metabolic network that supplies carbon for the biosynthesis of purines, thymidine and amino acids. Catalyzes the irreversible conversion of 5-formyltetrahydrofolate (5-CHO-H(4)PteGlu) to yield 5,10-methenyltetrahydrofolate. In Caenorhabditis elegans, this protein is Probable 5-formyltetrahydrofolate cyclo-ligase.